The chain runs to 1238 residues: DNA-directed RNA polymerase subunit beta (1238 aa).

The interval 1186–1238 (IEGREDTPPEEVYEEGYEEGFEEESEELPEDIDFEPDSFDIENDDLDLEDFDI) is disordered. A compositionally biased stretch (acidic residues) spans 1193 to 1238 (PPEEVYEEGYEEGFEEESEELPEDIDFEPDSFDIENDDLDLEDFDI).

It belongs to the RNA polymerase beta chain family. As to quaternary structure, the RNAP catalytic core consists of 2 alpha, 1 beta, 1 beta' and 1 omega subunit. When a sigma factor is associated with the core the holoenzyme is formed, which can initiate transcription.

The catalysed reaction is RNA(n) + a ribonucleoside 5'-triphosphate = RNA(n+1) + diphosphate. In terms of biological role, DNA-dependent RNA polymerase catalyzes the transcription of DNA into RNA using the four ribonucleoside triphosphates as substrates. The chain is DNA-directed RNA polymerase subunit beta from Thermoanaerobacter sp. (strain X514).